We begin with the raw amino-acid sequence, 296 residues long: N-acetylmuramic acid 6-phosphate etherase (296 aa).

Residues 54–217 form the SIS domain; sequence VISCFQKGGR…STASMVGIGK (164 aa). The Proton donor role is filled by Glu82. Residue Glu113 is part of the active site.

Belongs to the GCKR-like family. MurNAc-6-P etherase subfamily. Homodimer.

It catalyses the reaction N-acetyl-D-muramate 6-phosphate + H2O = N-acetyl-D-glucosamine 6-phosphate + (R)-lactate. The protein operates within amino-sugar metabolism; N-acetylmuramate degradation. Its function is as follows. Specifically catalyzes the cleavage of the D-lactyl ether substituent of MurNAc 6-phosphate, producing GlcNAc 6-phosphate and D-lactate. The chain is N-acetylmuramic acid 6-phosphate etherase from Listeria monocytogenes serotype 4b (strain CLIP80459).